The primary structure comprises 229 residues: Large ribosomal subunit protein uL1 (229 aa).

Belongs to the universal ribosomal protein uL1 family. As to quaternary structure, part of the 50S ribosomal subunit.

Functionally, binds directly to 23S rRNA. The L1 stalk is quite mobile in the ribosome, and is involved in E site tRNA release. Its function is as follows. Protein L1 is also a translational repressor protein, it controls the translation of the L11 operon by binding to its mRNA. The sequence is that of Large ribosomal subunit protein uL1 from Ureaplasma urealyticum serovar 10 (strain ATCC 33699 / Western).